Here is a 247-residue protein sequence, read N- to C-terminus: ATP synthase subunit a, chloroplastic (247 aa).

The next 5 membrane-spanning stretches (helical) occupy residues 38–58 (QVLITSWVVIAILLASATLAV), 95–115 (VPFIGTMFLFIFVSNWSGALL), 134–154 (INTTVALALLTSVAYFYAGLS), 199–219 (LVVVVLVSLVPSVVPIPVMFL), and 220–240 (GLFTSGIQALIFATLAAAYIG).

Belongs to the ATPase A chain family. As to quaternary structure, F-type ATPases have 2 components, CF(1) - the catalytic core - and CF(0) - the membrane proton channel. CF(1) has five subunits: alpha(3), beta(3), gamma(1), delta(1), epsilon(1). CF(0) has four main subunits: a, b, b' and c.

It localises to the plastid. It is found in the chloroplast thylakoid membrane. Key component of the proton channel; it plays a direct role in the translocation of protons across the membrane. The sequence is that of ATP synthase subunit a, chloroplastic from Lactuca sativa (Garden lettuce).